A 434-amino-acid polypeptide reads, in one-letter code: MTEFSPREIVSELDRFIVGHPEAKRAVAVALRNRWRRRRVPDDLRDEVTPKNILMIGPTGVGKTEIARRLAKLAQAPFLKVEATKFTEVGYVGRDVDQIVRDLVESAIQMVREKRRAAVRARAEAAAEERILDALTGPGSTAAREAFRRKLRAGELDDKEVELQLADTSSPFGAMDIPGQPGASMGVLNLGDMFGKAFGGRTKTHKTTVSGAWVPLIAEESDKLVDQEALTQEALELAENQGIVFLDEIDKVASRQDRAGADVSREGVQRDLLPLIEGTTVSTKHGPVKTDHILFIASGAFHVAKPSDLLPELQGRLPIRVELKALSRQDMRRILTEPEANLIRQHQALLATEGVTLTFTEDAIDALADAAVAVNGSVENIGARRLQTILEKVLEEVSFTAADRDGETITVDAAYVNGRIGDLAGNADLSKFIL.

Residues valine 18, 60 to 65 (GVGKTE), aspartate 247, glutamate 312, and arginine 384 contribute to the ATP site.

This sequence belongs to the ClpX chaperone family. HslU subfamily. A double ring-shaped homohexamer of HslV is capped on each side by a ring-shaped HslU homohexamer. The assembly of the HslU/HslV complex is dependent on binding of ATP.

The protein localises to the cytoplasm. Functionally, ATPase subunit of a proteasome-like degradation complex; this subunit has chaperone activity. The binding of ATP and its subsequent hydrolysis by HslU are essential for unfolding of protein substrates subsequently hydrolyzed by HslV. HslU recognizes the N-terminal part of its protein substrates and unfolds these before they are guided to HslV for hydrolysis. This is ATP-dependent protease ATPase subunit HslU from Phenylobacterium zucineum (strain HLK1).